A 781-amino-acid polypeptide reads, in one-letter code: Mitogen-activated protein kinase 7 (781 aa).

The tract at residues 1–27 is disordered; that stretch reads MAEPLKEDDGEDGSGEPPGPVKAEPAG. Ala-2 carries the N-acetylalanine modification. The required for cytoplasmic targeting stretch occupies residues 2–77; it reads AEPLKEDDGE…VVSSARRRLT (76 aa). Residues 55–347 form the Protein kinase domain; sequence YEIIETIGNG…AAAALRHPFL (293 aa). ATP contacts are provided by residues 61–69 and Lys-84; that span reads IGNGAYGVV. The segment at 78–139 is required for binding to MAP2K5; that stretch reads GQQVAIKKIP…FKSVYVVLDL (62 aa). A necessary for oligomerization region spans residues 140–406; it reads MESDLHQIIH…QQIRFQPSLQ (267 aa). The Proton acceptor role is filled by Asp-182. Positions 219–221 match the TXY motif; sequence TEY. Residues 402 to 708 are disordered; the sequence is QPSLQPVASE…PKGSGAGYGV (307 aa). The segment at 407–781 is may not be required for kinase activity; required to stimulate MEF2C activity; it reads PVASEPGCPD…LADLPDLQEP (375 aa). Composition is skewed to pro residues over residues 433–445 and 454–463; these read SPPP…PGPA and QPPPPASEPA. Over residues 476–486 the composition is skewed to low complexity; that stretch reads KAALKAALLKS. Basic and acidic residues-rich tracts occupy residues 502–519, 527–544, and 563–573; these read PEPR…EREE, RAKE…KERG, and DNDRSLLERWT. A Nuclear localization signal motif is present at residues 505–539; that stretch reads RKPVTAQERQREREEKRRRRQERAKEREKRRQERE. Pro residues-rich tracts occupy residues 578–594 and 601–614; these read PPAP…PPAG and GPLP…PAPA. Low complexity-rich tracts occupy residues 615–632 and 642–652; these read AGPA…LAPQ and GPSALSVLPYF. The segment covering 653-664 has biased composition (pro residues); sequence PSGPPPPDPGGA. Residues 668 to 685 show a composition bias toward polar residues; that stretch reads STSESPDVTLVTQQLSKS. A Phosphoserine modification is found at Ser-685. Position 698 is a phosphothreonine (Thr-698).

Belongs to the protein kinase superfamily. CMGC Ser/Thr protein kinase family. MAP kinase subfamily. As to quaternary structure, interacts with MAP2K5. Forms oligomers. Interacts with MEF2A, MEF2C and MEF2D; the interaction phosphorylates the MEF2s and enhances transcriptional activity of MEF2A, MEF2C but not MEF2D. Interacts with SGK1. Interacts with PML. Interacts (via N-terminal half) with HSP90AB1-CDC37 chaperone complex in resting cells; the interaction is MAP2K5-independent and prevents MAPK7 from ubiquitination and proteasomal degradation. Interacts with STUB1/CHIP; the interaction is enhanced in the presence of IGF1 or MAP2K5 and promotes STUB1/CHIP E3 ligase activity. Mg(2+) is required as a cofactor. Dually phosphorylated on Thr-219 and Tyr-221, which activates the enzyme.

The protein resides in the cytoplasm. It localises to the nucleus. Its subcellular location is the PML body. It catalyses the reaction L-seryl-[protein] + ATP = O-phospho-L-seryl-[protein] + ADP + H(+). The enzyme catalyses L-threonyl-[protein] + ATP = O-phospho-L-threonyl-[protein] + ADP + H(+). Its activity is regulated as follows. Activated by tyrosine and threonine phosphorylation. Activated in response to hyperosmolarity, hydrogen peroxide, and epidermal growth factor (EGF). Functionally, plays a role in various cellular processes such as proliferation, differentiation and cell survival. The upstream activator of MAPK7 is the MAPK kinase MAP2K5. Upon activation, it translocates to the nucleus and phosphorylates various downstream targets including MEF2C. EGF activates MAPK7 through a Ras-independent and MAP2K5-dependent pathway. As part of the MAPK/ERK signaling pathway, acts as a negative regulator of apoptosis in cardiomyocytes via interaction with STUB1/CHIP and promotion of STUB1-mediated ubiquitination and degradation of ICER-type isoforms of CREM. May have a role in muscle cell differentiation. May be important for endothelial function and maintenance of blood vessel integrity. MAP2K5 and MAPK7 interact specifically with one another and not with MEK1/ERK1 or MEK2/ERK2 pathways. Phosphorylates SGK1 at Ser-78 and this is required for growth factor-induced cell cycle progression. Involved in the regulation of p53/TP53 by disrupting the PML-MDM2 interaction. The chain is Mitogen-activated protein kinase 7 (MAPK7) from Bos taurus (Bovine).